We begin with the raw amino-acid sequence, 260 residues long: Thrombin-like enzyme 1 (260 aa).

An N-terminal signal peptide occupies residues 1-18 (MVLITVLANLLILQLSYA). The propeptide occupies 19–24 (QKSSEL). The 227-residue stretch at 25–251 (VIGGDECNIN…HLDWIQSIIA (227 aa)) folds into the Peptidase S1 domain. Intrachain disulfides connect cysteine 31/cysteine 165, cysteine 52/cysteine 68, cysteine 102/cysteine 258, cysteine 144/cysteine 212, cysteine 176/cysteine 191, and cysteine 202/cysteine 227. The Charge relay system role is filled by histidine 67. N-linked (GlcNAc...) asparagine glycosylation is present at asparagine 105. The active-site Charge relay system is aspartate 112. Asparagine 156 and asparagine 172 each carry an N-linked (GlcNAc...) asparagine glycan. Serine 206 acts as the Charge relay system in catalysis. An N-linked (GlcNAc...) asparagine glycan is attached at asparagine 253.

Belongs to the peptidase S1 family. Snake venom subfamily. As to quaternary structure, monomer. As to expression, expressed by the venom gland.

Its subcellular location is the secreted. Its function is as follows. Thrombin-like snake venom serine protease. The chain is Thrombin-like enzyme 1 from Trimeresurus albolabris (White-lipped pit viper).